The following is a 65-amino-acid chain: 7 kDa A-type inclusion protein (65 aa).

Over residues 1 to 20 (MSNQNIPQLSEYQTSVSQVA) the composition is skewed to polar residues. Residues 1-31 (MSNQNIPQLSEYQTSVSQVAVTPPPKPETPQ) form a disordered region.

This is 7 kDa A-type inclusion protein from Vaccinia virus (strain Copenhagen) (VACV).